Here is a 481-residue protein sequence, read N- to C-terminus: Probable glycine dehydrogenase (decarboxylating) subunit 2 (481 aa).

Residues 1 to 26 form a disordered region; that stretch reads MVIFEKTRGKNSPSVMPSKKGDVSNI. K263 is subject to N6-(pyridoxal phosphate)lysine.

This sequence belongs to the GcvP family. C-terminal subunit subfamily. As to quaternary structure, the glycine cleavage system is composed of four proteins: P, T, L and H. In this organism, the P 'protein' is a heterodimer of two subunits. It depends on pyridoxal 5'-phosphate as a cofactor.

The catalysed reaction is N(6)-[(R)-lipoyl]-L-lysyl-[glycine-cleavage complex H protein] + glycine + H(+) = N(6)-[(R)-S(8)-aminomethyldihydrolipoyl]-L-lysyl-[glycine-cleavage complex H protein] + CO2. Functionally, the glycine cleavage system catalyzes the degradation of glycine. The P protein binds the alpha-amino group of glycine through its pyridoxal phosphate cofactor; CO(2) is released and the remaining methylamine moiety is then transferred to the lipoamide cofactor of the H protein. This chain is Probable glycine dehydrogenase (decarboxylating) subunit 2, found in Francisella tularensis subsp. mediasiatica (strain FSC147).